A 206-amino-acid polypeptide reads, in one-letter code: Small ribosomal subunit protein uS4 (206 aa).

One can recognise an S4 RNA-binding domain in the interval 96–156; it reads GRLDNVVYRM…EKAKKQSRVK (61 aa).

This sequence belongs to the universal ribosomal protein uS4 family. In terms of assembly, part of the 30S ribosomal subunit. Contacts protein S5. The interaction surface between S4 and S5 is involved in control of translational fidelity.

In terms of biological role, one of the primary rRNA binding proteins, it binds directly to 16S rRNA where it nucleates assembly of the body of the 30S subunit. Functionally, with S5 and S12 plays an important role in translational accuracy. The polypeptide is Small ribosomal subunit protein uS4 (Escherichia fergusonii (strain ATCC 35469 / DSM 13698 / CCUG 18766 / IAM 14443 / JCM 21226 / LMG 7866 / NBRC 102419 / NCTC 12128 / CDC 0568-73)).